A 72-amino-acid chain; its full sequence is MSAIFNFQSLLTVILLLICTCAYIRSLTPSLLDKNKTGFLGIFWKCARIGERKSPYVAFCCIVMALTILFSE.

The first 26 residues, methionine 1–serine 26, serve as a signal peptide directing secretion. Residues leucine 27–lysine 53 lie on the Extracellular side of the membrane. Asparagine 35 carries an N-linked (GlcNAc...) asparagine glycan. A helical transmembrane segment spans residues serine 54 to serine 71. Position 72 (glutamate 72) is a topological domain, cytoplasmic.

It belongs to the KISH family.

It localises to the golgi apparatus membrane. Involved in the early part of the secretory pathway. The protein is Protein kish-A (tmem167a) of Danio rerio (Zebrafish).